The primary structure comprises 96 residues: Transcriptional regulator ATRY (96 aa).

The GATA-type; atypical zinc-finger motif lies at 1-12; sequence VICTACGQQVNQ. One can recognise an ADD domain in the interval 1-96; that stretch reads VICTACGQQV…IAVCDSVLEN (96 aa). Residues 27–82 form a PHD-type; atypical zinc finger; that stretch reads LICKRWCAEGGNLICCDSCHNAFCKKCIWRNLGRKEISKIMNEKNEWHCYICCPEP.

Belongs to the SNF2/RAD54 helicase family. In terms of tissue distribution, expressed in developing and adult testis. Also weakly expressed in prostate and epididymis.

The protein resides in the nucleus. It catalyses the reaction ATP + H2O = ADP + phosphate + H(+). Functionally, could be a global transcriptional regulator. Modifies gene expression by affecting chromatin. In Notamacropus eugenii (Tammar wallaby), this protein is Transcriptional regulator ATRY (ATRY).